The primary structure comprises 262 residues: uncharacterized protein (262 aa).

The S4 RNA-binding domain maps to Leu6–Val70. The active-site Nucleophile is the Asp108.

This sequence belongs to the pseudouridine synthase RsuA family.

It catalyses the reaction a uridine in RNA = a pseudouridine in RNA. This is an uncharacterized protein from Helicobacter pylori (strain ATCC 700392 / 26695) (Campylobacter pylori).